Consider the following 540-residue polypeptide: Terminase large subunit (540 aa).

3 residues coordinate Mn(2+): Asp-352, Asp-424, and Asp-523.

This sequence belongs to the skunavirus terminase large subunit family. As to quaternary structure, interacts with the terminase small subunit; the active complex is probably heterooligomeric. Requires Mn(2+) as cofactor. Mg(2+) serves as cofactor.

Functionally, probable terminase large subunit. The terminase large subunit acts as an ATP driven molecular motor necessary for viral DNA translocation into empty capsids and as an endonuclease that cuts the viral genome to initiate and to end a packaging reaction. The terminase lies at a unique vertex of the procapsid and is composed of two subunits, a small terminase subunit involved in viral DNA recognition (packaging sequence), and a large terminase subunit possessing endonucleolytic and ATPase activities. Both terminase subunits heterooligomerize and are docked on the portal protein to form the packaging machine. The terminase large subunit exhibits endonuclease activity and cleaves the viral genome concatemer. The polypeptide is Terminase large subunit (Lactococcus lactis (Lactococcus lactis bacteriophage p2)).